The primary structure comprises 310 residues: ADP-L-glycero-D-manno-heptose-6-epimerase (310 aa).

NADP(+) contacts are provided by residues 10–11 (FI), 31–32 (DN), Lys38, Lys53, 75–79 (EGACS), and Asn92. Tyr140 (proton acceptor) is an active-site residue. Lys144 lines the NADP(+) pocket. Position 169 (Asn169) interacts with substrate. 2 residues coordinate NADP(+): Val170 and Lys178. Lys178 serves as the catalytic Proton acceptor. Substrate-binding positions include Ser180, His187, 201 to 204 (FEGS), Arg209, and Tyr272.

The protein belongs to the NAD(P)-dependent epimerase/dehydratase family. HldD subfamily. Homopentamer. Requires NADP(+) as cofactor.

The enzyme catalyses ADP-D-glycero-beta-D-manno-heptose = ADP-L-glycero-beta-D-manno-heptose. It participates in nucleotide-sugar biosynthesis; ADP-L-glycero-beta-D-manno-heptose biosynthesis; ADP-L-glycero-beta-D-manno-heptose from D-glycero-beta-D-manno-heptose 7-phosphate: step 4/4. Catalyzes the interconversion between ADP-D-glycero-beta-D-manno-heptose and ADP-L-glycero-beta-D-manno-heptose via an epimerization at carbon 6 of the heptose. This is ADP-L-glycero-D-manno-heptose-6-epimerase from Salmonella newport (strain SL254).